We begin with the raw amino-acid sequence, 352 residues long: MTNTPSSAPSPLTYRDAGVDIDAGNELVERIKPLVKRSFRPEVMGGLGGFGALFDLSNKYREPVLVSGTDGVGTKLKLAHQLNRHDTIGIDLVAMCVNDVLVQGAEPLFFLDYFATGKLDIDTAAAVVGGIANGCTEAGCALIGGETAEMPDMYAPGEYDLAGFTVAAVEKSELKDGASVAAGDVLIGIASSGPHSNGYSLVRRIYDRAGRPAELELEGGVKLVDALMAPTRLYVKPILSLLKSHGAAIHGMAHITGGGLTENIIRVVPEGLGLDIQASSWTLPPVFQWLQKEGAVADSEMWRTFNCGIGFVLIVAPDQVAAVSEAVKAQGLDHWTIGQVVTAEGAERVHIG.

The protein belongs to the AIR synthase family.

It is found in the cytoplasm. It catalyses the reaction 2-formamido-N(1)-(5-O-phospho-beta-D-ribosyl)acetamidine + ATP = 5-amino-1-(5-phospho-beta-D-ribosyl)imidazole + ADP + phosphate + H(+). Its pathway is purine metabolism; IMP biosynthesis via de novo pathway; 5-amino-1-(5-phospho-D-ribosyl)imidazole from N(2)-formyl-N(1)-(5-phospho-D-ribosyl)glycinamide: step 2/2. This Stenotrophomonas maltophilia (strain R551-3) protein is Phosphoribosylformylglycinamidine cyclo-ligase.